Reading from the N-terminus, the 179-residue chain is Cell division protein SepF (179 aa).

Positions 18 to 57 are disordered; that stretch reads EDSTVPYEKGNEPVFTPVNSSQEPDLPMNQPSQSAGAKDS. Over residues 34 to 57 the composition is skewed to polar residues; it reads PVNSSQEPDLPMNQPSQSAGAKDS.

The protein belongs to the SepF family. In terms of assembly, homodimer. Interacts with FtsZ.

The protein resides in the cytoplasm. Cell division protein that is part of the divisome complex and is recruited early to the Z-ring. Probably stimulates Z-ring formation, perhaps through the cross-linking of FtsZ protofilaments. Its function overlaps with FtsA. This is Cell division protein SepF from Streptococcus pneumoniae (strain Hungary19A-6).